Reading from the N-terminus, the 538-residue chain is MGESDAYYNGGQQQQYNGGYQQQYQPQPPAASYQAPPQQPYQQQPYQQGPPQNGTGNGNGYMPAQGYNANEKGSFDEQFKIAKPKYNDLWAGILLILVFAGFVVVSGLALQGYSANKGNAGDGIYNNKNDFSPNTSTVILFMFVLAVAFVLSYAYVWMARLFPKQFIWVTGILNVCWAIGTAIFYLWRKYWSAGIVFLIFGLFMAFCFWTWISRIPFSALMLKTTIDVSKKYGHVYLVSLIGGIIATAFSAWYAITLVGIYVKYQPAQDNPSCADGGCGKGKVIGLIAFITFAMYWFSEWLKNTIHTTIAGVYGSWYFNPHNFPKDATRASAKRALTYSFGSIALGSLLVAIIQFLRQICNAARNQEGADGSFVGYAIFCCISCLLGLLEWAVEFINRYAFCHIALYGKAYFAAAKDTWKMIKDRGIDALINDCLIGPVLSFGALFIAYACALLAYLYLYFTDPAYNSDGQYTAVVMAFSFLIGFQIANVFTTPISSGIETIFVAAGWDPQVMWRDHPELYNEMVRVYPKVQQVIKDR.

The segment covering 1–54 (MGESDAYYNGGQQQQYNGGYQQQYQPQPPAASYQAPPQQPYQQQPYQQGPPQNG) has biased composition (low complexity). Residues 1–67 (MGESDAYYNG…GNGYMPAQGY (67 aa)) are disordered. The Cytoplasmic portion of the chain corresponds to 1–88 (MGESDAYYNG…FKIAKPKYND (88 aa)). The chain crosses the membrane as a helical span at residues 89 to 109 (LWAGILLILVFAGFVVVSGLA). Residues 110–137 (LQGYSANKGNAGDGIYNNKNDFSPNTST) are Extracellular-facing. Asn-134 carries an N-linked (GlcNAc...) asparagine glycan. A helical transmembrane segment spans residues 138–158 (VILFMFVLAVAFVLSYAYVWM). The Cytoplasmic segment spans residues 159-165 (ARLFPKQ). Residues 166-186 (FIWVTGILNVCWAIGTAIFYL) traverse the membrane as a helical segment. The Extracellular segment spans residues 187 to 191 (WRKYW). A helical membrane pass occupies residues 192 to 212 (SAGIVFLIFGLFMAFCFWTWI). The Cytoplasmic segment spans residues 213-239 (SRIPFSALMLKTTIDVSKKYGHVYLVS). A helical transmembrane segment spans residues 240–260 (LIGGIIATAFSAWYAITLVGI). At 261-280 (YVKYQPAQDNPSCADGGCGK) the chain is on the extracellular side. A helical transmembrane segment spans residues 281-301 (GKVIGLIAFITFAMYWFSEWL). The Cytoplasmic portion of the chain corresponds to 302–335 (KNTIHTTIAGVYGSWYFNPHNFPKDATRASAKRA). A helical membrane pass occupies residues 336–356 (LTYSFGSIALGSLLVAIIQFL). Over 357-372 (RQICNAARNQEGADGS) the chain is Extracellular. The chain crosses the membrane as a helical span at residues 373–393 (FVGYAIFCCISCLLGLLEWAV). At 394–434 (EFINRYAFCHIALYGKAYFAAAKDTWKMIKDRGIDALINDC) the chain is on the cytoplasmic side. The chain crosses the membrane as a helical span at residues 435-455 (LIGPVLSFGALFIAYACALLA). The Extracellular segment spans residues 456–474 (YLYLYFTDPAYNSDGQYTA). Residues 475 to 495 (VVMAFSFLIGFQIANVFTTPI) traverse the membrane as a helical segment. Over 496–538 (SSGIETIFVAAGWDPQVMWRDHPELYNEMVRVYPKVQQVIKDR) the chain is Cytoplasmic.

Belongs to the CTL (choline transporter-like) family.

The protein resides in the cell membrane. In terms of biological role, probably involved in transport through the plasma membrane. The chain is Protein PNS1 (PNS1) from Gibberella zeae (strain ATCC MYA-4620 / CBS 123657 / FGSC 9075 / NRRL 31084 / PH-1) (Wheat head blight fungus).